The primary structure comprises 125 residues: Mite group 2 allergen Gly d 2.02 (125 aa).

It belongs to the NPC2 family.

Its subcellular location is the secreted. The protein is Mite group 2 allergen Gly d 2.02 of Glycyphagus domesticus (House itch mite).